A 656-amino-acid polypeptide reads, in one-letter code: F-box/LRR-repeat protein 10 (656 aa).

The F-box domain occupies 20–66; the sequence is ERSLDLLPAALLETIMTKLDVASLCSLASTCKTLKSCVTRVLTFTPN. LRR repeat units lie at residues 71 to 96, 120 to 145, 151 to 176, 194 to 221, 243 to 268, 277 to 301, 310 to 335, 336 to 361, 362 to 387, 388 to 412, 413 to 437, 439 to 463, 464 to 491, 492 to 517, 518 to 551, and 552 to 578; these read NVSLSMETVRPLLFPNQQLSSLKLDC, CRDFSGDLISEIGRKCKDLRLLCLGS, GRSISRCALEDLLNGCSHLEVLALMF, SDRLTHLELGHITSRMMTQLLTSTEISG, VDCITDAVVKAISKSLPSLIDLDIRD, VSDLTDFGLHEINQNGKLKHLSLIR, FRRVSDQGMLFLADKCLGMETICLGG, FCRVTDAGFKTILHSCASLSKFSIYH, GPKLTDLVFHDILATTLSLSHVSLRR, CHLLTDHAIQKLASSLKLENLDLRG, CRNLRDETLTAVSHLPKLKVLLLDG, DISDTGLSYLKEGVLDSLVSLSVRG, CRNLTDKFMSTLFDGSSKLALRELDLSN, LPNLTDAAIFALAKSGAPITKLQLRE, CRLIGDASVMALASTRVYEDECPGSSLCLLDLYD, and CGGITQLSFKWLKKPFFPRLKWLGITG. A disordered region spans residues 632–656; sequence ILGDEGDVEMEDAEDESEEDASEED.

This Arabidopsis thaliana (Mouse-ear cress) protein is F-box/LRR-repeat protein 10 (FBL10).